The following is a 171-amino-acid chain: MFRLYFFFNVICIFLAIRSAIGGEVPDATEQKINNFLASGKDSEDLSKRAAAMWFGPRLGKRTIASELHDEMMDEIDDNPLYYSGESPQRVASEIAQGTPYVVLLLTGRVLRQPQPVFYHSTTPRLGRRDASSSNENNSRPPFAPRLGRNLPFSPRLGRSFGAPVVDNFAY.

The signal sequence occupies residues 1–22 (MFRLYFFFNVICIFLAIRSAIG). The propeptide occupies 23–47 (GEVPDATEQKINNFLASGKDSEDLS). At Leu-59 the chain carries Leucine amide. The propeptide occupies 63 to 111 (TIASELHDEMMDEIDDNPLYYSGESPQRVASEIAQGTPYVVLLLTGRVL). The interval 120-151 (HSTTPRLGRRDASSSNENNSRPPFAPRLGRNL) is disordered. Leucine amide is present on residues Leu-126, Leu-147, and Leu-157. Positions 160–171 (SFGAPVVDNFAY) are excised as a propeptide.

It belongs to the pyrokinin family.

The protein resides in the secreted. Functionally, a hormone that controls sex pheromone production in females and pheromone responsiveness in male. Also mediates visceral muscle contractile activity (myotropic activity). The protein is PBAN-type neuropeptides of Aedes aegypti (Yellowfever mosquito).